An 827-amino-acid polypeptide reads, in one-letter code: MAGQAASKRRLISRSLQSADICLQHQDYGTAYAHLLLVLTLAPEQKEALKEMFQYSLFKWAEELYALNRSQDLFNCYEQALELFPIDDVICNSMGEHLFRLGFRDEAAGYFYKALKLNPSSAEAKENFYRVANWLIERWHFIMLNDTKRNLMYRAAIQNAIQNGCKTVLDIGTGTGILSMFAKKAGAPFVYACELSKTMYELACEIVTANQMDGHIKLLHMKSHDIQIPEHIPERVSLVVTETVDAGLFGEGIVETLIHAWKNLLLQPKPKDGRVEAYGKVIPSSAVIYGMAVECPEIRRHYSVGVTEVAGIKLGDAVKFCSPIHSSHGPDDVTEPYTTEKMSRVPGGYKALSQPFQVMTVDFNSLQALEYIASGKSNRISVPVYQQGQFDCFITWFALQLDNEHSLSTEPSEETCWEQAVFPVQKLPDEGCLVNTGDTIVVDVSCPDCYLRLDLSTIVLSESSCDQTENMVMGNETDICDALANLHTTTNKGNMQELCILEPGEIALLNNAVYHESFMAAISKVIGSLELKESCSVVRNSQEQDVNFAQPVSEDRLHVLDVSEGFSILPLIAAKLGKVKAFSSVEKEQHRVALEKLSVINDLNNNESLEFCLSQLETDDGAAQKPKSDKMWSIIILDVIETCGLIRQDLLEKAAIARCLLEPGGKIFPHAVVMQGMLIESKTLLHEGSVQGNEPTLGFLIAPFINRFKVPAHVFLNLSTVPCIPLSEQFELLRLDLMNPCSNNQSSSVMRIKVNICRSGQVTAVTFWYHIHIDEAISLDTSSEASHWKQAAYVLETPTCVLEGEELLLEVQFQNSSMSMKLTRPLQ.

2 TPR repeats span residues 54–87 (QYSLFKWAEELYALNRSQDLFNCYEQALELFPID) and 88–121 (DVICNSMGEHLFRLGFRDEAAGYFYKALKLNPSS). SAM-dependent MTase PRMT-type domains follow at residues 124–453 (AKEN…YLRL) and 511–827 (NAVY…RPLQ).

Belongs to the class I-like SAM-binding methyltransferase superfamily. Protein arginine N-methyltransferase family.

The protein localises to the cytoplasm. The catalysed reaction is L-arginyl-[protein] + 2 S-adenosyl-L-methionine = N(omega),N(omega)'-dimethyl-L-arginyl-[protein] + 2 S-adenosyl-L-homocysteine + 2 H(+). Arginine methyltransferase that can both catalyze the formation of omega-N monomethylarginine (MMA) and symmetrical dimethylarginine (sDMA). The polypeptide is Protein arginine N-methyltransferase 9 (prmt9) (Xenopus laevis (African clawed frog)).